The sequence spans 282 residues: Hydroxyethylthiazole kinase 2 (282 aa).

A substrate-binding site is contributed by M44. Residues R120 and S179 each contribute to the ATP site. Substrate is bound at residue G206.

Belongs to the Thz kinase family. Mg(2+) is required as a cofactor.

It carries out the reaction 5-(2-hydroxyethyl)-4-methylthiazole + ATP = 4-methyl-5-(2-phosphooxyethyl)-thiazole + ADP + H(+). It participates in cofactor biosynthesis; thiamine diphosphate biosynthesis; 4-methyl-5-(2-phosphoethyl)-thiazole from 5-(2-hydroxyethyl)-4-methylthiazole: step 1/1. Functionally, catalyzes the phosphorylation of the hydroxyl group of 4-methyl-5-beta-hydroxyethylthiazole (THZ). In Methanosphaera stadtmanae (strain ATCC 43021 / DSM 3091 / JCM 11832 / MCB-3), this protein is Hydroxyethylthiazole kinase 2.